Consider the following 215-residue polypeptide: Pyridoxine/pyridoxamine 5'-phosphate oxidase (215 aa).

Substrate-binding positions include 11-14 (RRDY) and Lys-69. FMN-binding positions include 64–69 (RVVLLK), 79–80 (YT), Lys-86, and Gln-108. Positions 126, 130, and 134 each coordinate substrate. FMN is bound by residues 143–144 (QS) and Trp-188. 194-196 (RLH) is a substrate binding site. Arg-198 is a binding site for FMN.

It belongs to the pyridoxamine 5'-phosphate oxidase family. In terms of assembly, homodimer. FMN is required as a cofactor.

The catalysed reaction is pyridoxamine 5'-phosphate + O2 + H2O = pyridoxal 5'-phosphate + H2O2 + NH4(+). It catalyses the reaction pyridoxine 5'-phosphate + O2 = pyridoxal 5'-phosphate + H2O2. It functions in the pathway cofactor metabolism; pyridoxal 5'-phosphate salvage; pyridoxal 5'-phosphate from pyridoxamine 5'-phosphate: step 1/1. It participates in cofactor metabolism; pyridoxal 5'-phosphate salvage; pyridoxal 5'-phosphate from pyridoxine 5'-phosphate: step 1/1. Its function is as follows. Catalyzes the oxidation of either pyridoxine 5'-phosphate (PNP) or pyridoxamine 5'-phosphate (PMP) into pyridoxal 5'-phosphate (PLP). This chain is Pyridoxine/pyridoxamine 5'-phosphate oxidase, found in Legionella pneumophila (strain Lens).